Reading from the N-terminus, the 91-residue chain is Probable Fe(2+)-trafficking protein (91 aa).

Belongs to the Fe(2+)-trafficking protein family. Monomer.

Its function is as follows. Could be a mediator in iron transactions between iron acquisition and iron-requiring processes, such as synthesis and/or repair of Fe-S clusters in biosynthetic enzymes. The polypeptide is Probable Fe(2+)-trafficking protein (Klebsiella pneumoniae (strain 342)).